A 431-amino-acid polypeptide reads, in one-letter code: Serine hydroxymethyltransferase 2 (431 aa).

(6S)-5,6,7,8-tetrahydrofolate contacts are provided by residues L131 and 135–137 (GHL). An N6-(pyridoxal phosphate)lysine modification is found at K240. E256 serves as a coordination point for (6S)-5,6,7,8-tetrahydrofolate.

This sequence belongs to the SHMT family. Homodimer. Requires pyridoxal 5'-phosphate as cofactor.

It is found in the cytoplasm. The enzyme catalyses (6R)-5,10-methylene-5,6,7,8-tetrahydrofolate + glycine + H2O = (6S)-5,6,7,8-tetrahydrofolate + L-serine. The protein operates within one-carbon metabolism; tetrahydrofolate interconversion. It functions in the pathway amino-acid biosynthesis; glycine biosynthesis; glycine from L-serine: step 1/1. Catalyzes the reversible interconversion of serine and glycine with tetrahydrofolate (THF) serving as the one-carbon carrier. This reaction serves as the major source of one-carbon groups required for the biosynthesis of purines, thymidylate, methionine, and other important biomolecules. Also exhibits THF-independent aldolase activity toward beta-hydroxyamino acids, producing glycine and aldehydes, via a retro-aldol mechanism. The sequence is that of Serine hydroxymethyltransferase 2 from Vibrio vulnificus (strain CMCP6).